Consider the following 163-residue polypeptide: Lipoprotein signal peptidase (163 aa).

The next 3 membrane-spanning stretches (helical) occupy residues 7 to 27, 64 to 84, and 99 to 119; these read LSFL…KYLV, WQKY…VYLL, and ALII…GFVV. Active-site residues include Asp-120 and Asp-138. The chain crosses the membrane as a helical span at residues 133–153; that stretch reads VFNVADIAICVGVGLLILDSF.

The protein belongs to the peptidase A8 family.

The protein localises to the cell inner membrane. It carries out the reaction Release of signal peptides from bacterial membrane prolipoproteins. Hydrolyzes -Xaa-Yaa-Zaa-|-(S,diacylglyceryl)Cys-, in which Xaa is hydrophobic (preferably Leu), and Yaa (Ala or Ser) and Zaa (Gly or Ala) have small, neutral side chains.. It functions in the pathway protein modification; lipoprotein biosynthesis (signal peptide cleavage). Functionally, this protein specifically catalyzes the removal of signal peptides from prolipoproteins. The chain is Lipoprotein signal peptidase from Actinobacillus succinogenes (strain ATCC 55618 / DSM 22257 / CCUG 43843 / 130Z).